Consider the following 208-residue polypeptide: Proheparin-binding EGF-like growth factor (208 aa).

The first 19 residues, 1 to 19 (MKLLPSVVLKLFLAAVLSA), serve as a signal peptide directing secretion. Residues 20-62 (LVTGESLERLRRGLAAGTSNPDPPTVSTDQLLPLGGGRDRKVR) constitute a propeptide, or 72, or 73, or 76, or 81. The Extracellular portion of the chain corresponds to 20–160 (LVTGESLERL…ENRLYTYDHT (141 aa)). The segment at 33 to 56 (LAAGTSNPDPPTVSTDQLLPLGGG) is disordered. Residues 36 to 49 (GTSNPDPPTVSTDQ) show a composition bias toward polar residues. O-linked (GalNAc...) threonine glycosylation is present at threonine 37. The O-linked (GalNAc...) serine glycan is linked to serine 38. Threonine 44, threonine 47, threonine 75, and threonine 85 each carry an O-linked (GalNAc...) threonine glycan. Positions 82–104 (ALATPNKEEHGKRKKKGKGLGKK) are disordered. A compositionally biased stretch (basic residues) spans 93 to 102 (KRKKKGKGLG). Residues 104–144 (KRDPCLRKYKDFCIHGECKYVKELRAPSCICHPGYHGERCH) form the EGF-like domain. Disulfide bonds link cysteine 108/cysteine 121, cysteine 116/cysteine 132, and cysteine 134/cysteine 143. A propeptide spans 149–208 (PVENRLYTYDHTTILAVVAVVLSSVCLLVIVGLLMFRYHRRGGYDVENEEKVKLGMTNSH) (C-terminal). The helical transmembrane segment at 161–184 (TILAVVAVVLSSVCLLVIVGLLMF) threads the bilayer. The Cytoplasmic portion of the chain corresponds to 185-208 (RYHRRGGYDVENEEKVKLGMTNSH).

In terms of assembly, interacts with FBLN1. Interacts with EGFR and ERBB4. Post-translationally, several N-termini have been identified by direct sequencing. The forms with N-termini 63, 73 and 74 have been tested and found to be biologically active. In terms of processing, O-glycosylated with core 1 or possibly core 8 glycans. Thr-47 is a minor glycosylation site compared to Thr-44.

The protein localises to the secreted. The protein resides in the extracellular space. It is found in the cell membrane. Functionally, growth factor that mediates its effects via EGFR, ERBB2 and ERBB4. Required for normal cardiac valve formation and normal heart function. Promotes smooth muscle cell proliferation. May be involved in macrophage-mediated cellular proliferation. It is mitogenic for fibroblasts, but not endothelial cells. It is able to bind EGF receptor/EGFR with higher affinity than EGF itself and is a far more potent mitogen for smooth muscle cells than EGF. Also acts as a diphtheria toxin receptor. This chain is Proheparin-binding EGF-like growth factor (HBEGF), found in Homo sapiens (Human).